Consider the following 926-residue polypeptide: Alanine--tRNA ligase (926 aa).

Zn(2+) contacts are provided by His577, His581, Cys680, and His684.

The protein belongs to the class-II aminoacyl-tRNA synthetase family. Zn(2+) is required as a cofactor.

It localises to the cytoplasm. The catalysed reaction is tRNA(Ala) + L-alanine + ATP = L-alanyl-tRNA(Ala) + AMP + diphosphate. Catalyzes the attachment of alanine to tRNA(Ala) in a two-step reaction: alanine is first activated by ATP to form Ala-AMP and then transferred to the acceptor end of tRNA(Ala). Also edits incorrectly charged Ser-tRNA(Ala) and Gly-tRNA(Ala) via its editing domain. This is Alanine--tRNA ligase from Methylacidiphilum infernorum (isolate V4) (Methylokorus infernorum (strain V4)).